The chain runs to 506 residues: Bifunctional purine biosynthesis protein PurH (506 aa).

The 146-residue stretch at 1 to 146 (MARLALLSVS…KNFAHLTVLC (146 aa)) folds into the MGS-like domain.

The protein belongs to the PurH family.

The catalysed reaction is (6R)-10-formyltetrahydrofolate + 5-amino-1-(5-phospho-beta-D-ribosyl)imidazole-4-carboxamide = 5-formamido-1-(5-phospho-D-ribosyl)imidazole-4-carboxamide + (6S)-5,6,7,8-tetrahydrofolate. It carries out the reaction IMP + H2O = 5-formamido-1-(5-phospho-D-ribosyl)imidazole-4-carboxamide. It functions in the pathway purine metabolism; IMP biosynthesis via de novo pathway; 5-formamido-1-(5-phospho-D-ribosyl)imidazole-4-carboxamide from 5-amino-1-(5-phospho-D-ribosyl)imidazole-4-carboxamide (10-formyl THF route): step 1/1. It participates in purine metabolism; IMP biosynthesis via de novo pathway; IMP from 5-formamido-1-(5-phospho-D-ribosyl)imidazole-4-carboxamide: step 1/1. The sequence is that of Bifunctional purine biosynthesis protein PurH from Trichormus variabilis (strain ATCC 29413 / PCC 7937) (Anabaena variabilis).